Here is a 182-residue protein sequence, read N- to C-terminus: Translation initiation factor IF-3 (182 aa).

The interval 1 to 22 is disordered; it reads MPLGDCNISTPDNKQNRKNQEI.

Belongs to the IF-3 family. As to quaternary structure, monomer.

It localises to the cytoplasm. Its function is as follows. IF-3 binds to the 30S ribosomal subunit and shifts the equilibrium between 70S ribosomes and their 50S and 30S subunits in favor of the free subunits, thus enhancing the availability of 30S subunits on which protein synthesis initiation begins. The sequence is that of Translation initiation factor IF-3 from Xanthomonas campestris pv. campestris (strain ATCC 33913 / DSM 3586 / NCPPB 528 / LMG 568 / P 25).